Here is a 1357-residue protein sequence, read N- to C-terminus: DNA-directed RNA polymerase subunit beta (1357 aa).

It belongs to the RNA polymerase beta chain family. As to quaternary structure, the RNAP catalytic core consists of 2 alpha, 1 beta, 1 beta' and 1 omega subunit. When a sigma factor is associated with the core the holoenzyme is formed, which can initiate transcription.

The catalysed reaction is RNA(n) + a ribonucleoside 5'-triphosphate = RNA(n+1) + diphosphate. In terms of biological role, DNA-dependent RNA polymerase catalyzes the transcription of DNA into RNA using the four ribonucleoside triphosphates as substrates. The sequence is that of DNA-directed RNA polymerase subunit beta from Pseudomonas aeruginosa (strain ATCC 15692 / DSM 22644 / CIP 104116 / JCM 14847 / LMG 12228 / 1C / PRS 101 / PAO1).